The following is a 569-amino-acid chain: Mitogen-activated protein kinase 7 (569 aa).

Positions Tyr-13 to Phe-304 constitute a Protein kinase domain. ATP is bound by residues Val-19–Val-27 and Lys-42. Asp-139 acts as the Proton acceptor in catalysis. Thr-175 carries the post-translational modification Phosphothreonine. The TXY signature appears at Thr-175–Tyr-177. A Phosphotyrosine modification is found at Tyr-177. The disordered stretch occupies residues Thr-401 to Val-420.

This sequence belongs to the protein kinase superfamily. CMGC Ser/Thr protein kinase family. MAP kinase subfamily. Dually phosphorylated on Thr-175 and Tyr-177, which activates the enzyme.

It catalyses the reaction L-seryl-[protein] + ATP = O-phospho-L-seryl-[protein] + ADP + H(+). It carries out the reaction L-threonyl-[protein] + ATP = O-phospho-L-threonyl-[protein] + ADP + H(+). Its activity is regulated as follows. Activated by threonine and tyrosine phosphorylation. The polypeptide is Mitogen-activated protein kinase 7 (MPK7) (Oryza sativa subsp. japonica (Rice)).